The following is a 95-amino-acid chain: Aspartyl/glutamyl-tRNA(Asn/Gln) amidotransferase subunit C (95 aa).

It belongs to the GatC family. In terms of assembly, heterotrimer of A, B and C subunits.

The catalysed reaction is L-glutamyl-tRNA(Gln) + L-glutamine + ATP + H2O = L-glutaminyl-tRNA(Gln) + L-glutamate + ADP + phosphate + H(+). It catalyses the reaction L-aspartyl-tRNA(Asn) + L-glutamine + ATP + H2O = L-asparaginyl-tRNA(Asn) + L-glutamate + ADP + phosphate + 2 H(+). Functionally, allows the formation of correctly charged Asn-tRNA(Asn) or Gln-tRNA(Gln) through the transamidation of misacylated Asp-tRNA(Asn) or Glu-tRNA(Gln) in organisms which lack either or both of asparaginyl-tRNA or glutaminyl-tRNA synthetases. The reaction takes place in the presence of glutamine and ATP through an activated phospho-Asp-tRNA(Asn) or phospho-Glu-tRNA(Gln). The polypeptide is Aspartyl/glutamyl-tRNA(Asn/Gln) amidotransferase subunit C (Rhizorhabdus wittichii (strain DSM 6014 / CCUG 31198 / JCM 15750 / NBRC 105917 / EY 4224 / RW1) (Sphingomonas wittichii)).